The chain runs to 445 residues: Argininosuccinate synthase (445 aa).

Residues 17-25 (AFSGGLDTS) and Ala-43 contribute to the ATP site. Tyr-99 contacts L-citrulline. 2 residues coordinate ATP: Gly-129 and Thr-131. Thr-131, Asn-135, and Asp-136 together coordinate L-aspartate. An L-citrulline-binding site is contributed by Asn-135. Asp-136 is an ATP binding site. Arg-139 and Ser-192 together coordinate L-citrulline. Residue Asp-194 participates in ATP binding. Residues Thr-201, Glu-203, and Glu-280 each contribute to the L-citrulline site.

It belongs to the argininosuccinate synthase family. Type 2 subfamily. Homotetramer.

The protein localises to the cytoplasm. It carries out the reaction L-citrulline + L-aspartate + ATP = 2-(N(omega)-L-arginino)succinate + AMP + diphosphate + H(+). It functions in the pathway amino-acid biosynthesis; L-arginine biosynthesis; L-arginine from L-ornithine and carbamoyl phosphate: step 2/3. The chain is Argininosuccinate synthase from Afipia carboxidovorans (strain ATCC 49405 / DSM 1227 / KCTC 32145 / OM5) (Oligotropha carboxidovorans).